The following is a 78-amino-acid chain: HSQGTFTNDYSKYLDTRRAQDFVQWLMSTKRSGGITXXXXXXXXHADGTYTSDVSSYLQDQAAKKFVTWLKQGQDRRE.

It belongs to the glucagon family.

It is found in the secreted. Plays a key role in glucose metabolism and homeostasis. Regulates blood glucose by increasing gluconeogenesis and decreasing glycolysis. In Atractosteus spatula (Alligator gar), this protein is Pro-glucagon (gcg).